Consider the following 544-residue polypeptide: Zinc finger and BTB domain-containing protein 7B (544 aa).

A BTB domain is found at 34–115 (CDLTIRTQGL…AYTATLTTSS (82 aa)). Phosphoserine is present on S150. 2 disordered regions span residues 171–221 (TTAS…ARAN) and 244–314 (GRLG…EDPI). Positions 186–200 (PQVPLLPPPPPPPRP) are enriched in pro residues. A compositionally biased stretch (basic residues) spans 201–210 (VARRSRKPRK). K210 and K216 each carry N6-acetyllysine; by EP300; alternate. Residues K210 and K216 each participate in a glycyl lysine isopeptide (Lys-Gly) (interchain with G-Cter in ubiquitin); alternate cross-link. Acidic residues predominate over residues 277–286 (FEGEEEEEEM). K339 carries the N6-acetyllysine; by EP300; alternate modification. Residue K339 forms a Glycyl lysine isopeptide (Lys-Gly) (interchain with G-Cter in ubiquitin); alternate linkage. The tract at residues 348–404 (MPQECPVCHKIIHGAGKLPRHMRTHTGEKPFACEVCGVRFTRNDKLKIHMRKHTGER) is required for interaction with and acetylation by EP300. Residues 350–372 (QECPVCHKIIHGAGKLPRHMRTH) form a C2H2-type 1 zinc finger. A Phosphothreonine modification is found at T373. 2 consecutive C2H2-type zinc fingers follow at residues 378–400 (FACE…MRKH) and 406–428 (YSCP…MHLH). The segment at 434–458 (YECHLCHKAFAKEDHLQRHLKGQNC) adopts a C2H2-type 4; atypical zinc-finger fold. Disordered stretches follow at residues 465–493 (RRRK…DLSN) and 507–544 (WEQS…MESS). Low complexity-rich tracts occupy residues 511–522 (ATTGPPVTTQGP) and 531–544 (TPTT…MESS).

As to quaternary structure, homodimerizes. Interacts with NCL, NEDD4 and YBX1. Interacts with HNRNPU (via RNA-binding RGG-box region); the interaction facilitates the recruitment of long non-coding RNA Blnc1 by ZBTB7B. Interacts with HDAC4 and HDAC5; the interaction allows the recruitment of HDAC4 and HDAC5 on CD8 loci for deacetylation and possible inhibition of CD8 genes expression. Post-translationally, acetylated directly and specifically by EP300. EP300-mediated acetylation of Lys-210, Lys-216 and Lys-339 stabilizes the protein by antagonizing ubiquitin conjugation. In terms of processing, ubiquitinated, leading to proteasomal degradation. Competes with acetylation on Lys-210, Lys-216 and Lys-339. As to expression, widely expressed, with a higher level in skin. Expressed in thymus. Restricted to CD4 cells (mature single positive CD4(+) and intermediate CD4(+)CD8(+) cells). Expressed in the luminal epithelial cells in the mammary glands where is up-regulated at late pregnancy and lactation. Expression is enriched in brown fat.

The protein localises to the nucleus. Its function is as follows. Transcription regulator that acts as a key regulator of lineage commitment of immature T-cell precursors. Exerts distinct biological functions in the mammary epithelial cells and T cells in a tissue-specific manner. Necessary and sufficient for commitment of CD4 lineage, while its absence causes CD8 commitment. Development of immature T-cell precursors (thymocytes) to either the CD4 helper or CD8 killer T-cell lineages correlates precisely with their T-cell receptor specificity for major histocompatibility complex class II or class I molecules, respectively. Cross-antagonism between ZBTB7B and CBF complexes are determinative to CD4 versus CD8 cell fate decision. Suppresses RUNX3 expression and imposes CD4+ lineage fate by inducing the SOCS suppressors of cytokine signaling. induces, as a transcriptional activator, SOCS genes expression which represses RUNX3 expression and promotes the CD4+ lineage fate. During CD4 lineage commitment, associates with multiple sites at the CD8 locus, acting as a negative regulator of the CD8 promoter and enhancers by epigenetic silencing through the recruitment of class II histone deacetylases, such as HDAC4 and HDAC5, to these loci. Regulates the development of IL17-producing CD1d-restricted naural killer (NK) T cells. Also functions as an important metabolic regulator in the lactating mammary glands. Critical feed-forward regulator of insulin signaling in mammary gland lactation, directly regulates expression of insulin receptor substrate-1 (IRS-1) and insulin-induced Akt-mTOR-SREBP signaling. Transcriptional repressor of the collagen COL1A1 and COL1A2 genes. May also function as a repressor of fibronectin and possibly other extracellular matrix genes. Potent driver of brown fat development, thermogenesis and cold-induced beige fat formation. Recruits the brown fat lncRNA 1 (Blnc1):HNRNPU ribonucleoprotein complex to activate thermogenic gene expression in brown and beige adipocytes. This Mus musculus (Mouse) protein is Zinc finger and BTB domain-containing protein 7B.